We begin with the raw amino-acid sequence, 123 residues long: MKTLARILVVFTLIVGLIGFFNPLPAQAALNAVDAKLTTEFGQKIDLNNSHIREFRDLRGFYPNLASKIIKNAPYDKVEDVLNIPGLSERQQERLQANLDKFTVTEPSKELIEGDDRINPGVY.

An N-terminal signal peptide occupies residues 1 to 28; the sequence is MKTLARILVVFTLIVGLIGFFNPLPAQA.

This sequence belongs to the PsbU family. As to quaternary structure, PSII is composed of 1 copy each of membrane proteins PsbA, PsbB, PsbC, PsbD, PsbE, PsbF, PsbH, PsbI, PsbJ, PsbK, PsbL, PsbM, PsbT, PsbX, PsbY, PsbZ, Psb30/Ycf12, peripheral proteins PsbO, CyanoQ (PsbQ), PsbU, PsbV and a large number of cofactors. It forms dimeric complexes.

The protein localises to the cellular thylakoid membrane. Functionally, one of the extrinsic, lumenal subunits of photosystem II (PSII). PSII is a light-driven water plastoquinone oxidoreductase, using light energy to abstract electrons from H(2)O, generating a proton gradient subsequently used for ATP formation. The extrinsic proteins stabilize the structure of photosystem II oxygen-evolving complex (OEC), the ion environment of oxygen evolution and protect the OEC against heat-induced inactivation. The sequence is that of Photosystem II extrinsic protein U from Gloeothece citriformis (strain PCC 7424) (Cyanothece sp. (strain PCC 7424)).